The primary structure comprises 230 residues: Voltage-gated hydrogen channel 1 (230 aa).

The Cytoplasmic portion of the chain corresponds to 1-58; the sequence is MAGCLRHFTSVGDDTKKKAWKEEDVEVAHEEEPKNTPHPFIASYSFRGALKWLFSSHK. The helical transmembrane segment at 59-79 threads the bilayer; it reads FQIVIICLVILDALFVLVEVL. The Extracellular segment spans residues 80-96; that stretch reads LDLELLAEKVDHIIPEI. A helical membrane pass occupies residues 97 to 119; it reads FHYLSISVLSFFILEIAGKLYAF. The Cytoplasmic segment spans residues 120-127; it reads RLEFFHHK. The chain crosses the membrane as a helical span at residues 128 to 148; that stretch reads FEVFDAAIVVISFIIDIVYIS. Residues 149–155 are Extracellular-facing; that stretch reads REDIFNA. The helical transmembrane segment at 156–176 threads the bilayer; that stretch reads VGLLILLRLWRVARIVNGIIV. Residues 177-226 adopt a coiled-coil conformation; sequence SVKTQAEDKIHRLKENQESLLEKVAHLEQQCAQQEQEIVRLQTLLQQHNV. Over 177-230 the chain is Cytoplasmic; the sequence is SVKTQAEDKIHRLKENQESLLEKVAHLEQQCAQQEQEIVRLQTLLQQHNVFPAS.

It belongs to the hydrogen channel family. As to quaternary structure, homodimer.

The protein localises to the membrane. Its subcellular location is the cell membrane. Its function is as follows. Mediates the voltage-dependent proton permeability of excitable membranes. Forms a proton-selective channel through which protons may pass in accordance with their electrochemical gradient. The polypeptide is Voltage-gated hydrogen channel 1 (hvcn1) (Xenopus tropicalis (Western clawed frog)).